We begin with the raw amino-acid sequence, 527 residues long: Lysine--tRNA ligase (527 aa).

The short motif at 44–52 (PSGLPHIGT) is the 'HIGH' region element. Positions 290-294 (KISKS) match the 'KMSKS' region motif. K293 lines the ATP pocket.

Belongs to the class-I aminoacyl-tRNA synthetase family.

Its subcellular location is the cytoplasm. It carries out the reaction tRNA(Lys) + L-lysine + ATP = L-lysyl-tRNA(Lys) + AMP + diphosphate. In Roseobacter denitrificans (strain ATCC 33942 / OCh 114) (Erythrobacter sp. (strain OCh 114)), this protein is Lysine--tRNA ligase.